Consider the following 819-residue polypeptide: Leucine--tRNA ligase (819 aa).

The short motif at 42 to 52 is the 'HIGH' region element; sequence PYPSGRLHMGH. The 'KMSKS' region motif lies at 576–580; the sequence is KMSKS. Residue Lys579 coordinates ATP.

This sequence belongs to the class-I aminoacyl-tRNA synthetase family.

The protein localises to the cytoplasm. It catalyses the reaction tRNA(Leu) + L-leucine + ATP = L-leucyl-tRNA(Leu) + AMP + diphosphate. This chain is Leucine--tRNA ligase, found in Nitrosococcus oceani (strain ATCC 19707 / BCRC 17464 / JCM 30415 / NCIMB 11848 / C-107).